Consider the following 305-residue polypeptide: Acetyl-coenzyme A carboxylase carboxyl transferase subunit beta (305 aa).

Positions 23-292 (GWLKCTHCNE…EENEPSPPPK (270 aa)) constitute a CoA carboxyltransferase N-terminal domain. Zn(2+)-binding residues include C27, C30, C46, and C49. The C4-type zinc finger occupies 27–49 (CTHCNELIHANELEQNSNCCPKC). A disordered region spans residues 281 to 305 (FSEENEPSPPPKNLIKKTSPLKDKN).

The protein belongs to the AccD/PCCB family. In terms of assembly, acetyl-CoA carboxylase is a heterohexamer composed of biotin carboxyl carrier protein (AccB), biotin carboxylase (AccC) and two subunits each of ACCase subunit alpha (AccA) and ACCase subunit beta (AccD). The cofactor is Zn(2+).

It is found in the cytoplasm. It catalyses the reaction N(6)-carboxybiotinyl-L-lysyl-[protein] + acetyl-CoA = N(6)-biotinyl-L-lysyl-[protein] + malonyl-CoA. The protein operates within lipid metabolism; malonyl-CoA biosynthesis; malonyl-CoA from acetyl-CoA: step 1/1. Component of the acetyl coenzyme A carboxylase (ACC) complex. Biotin carboxylase (BC) catalyzes the carboxylation of biotin on its carrier protein (BCCP) and then the CO(2) group is transferred by the transcarboxylase to acetyl-CoA to form malonyl-CoA. The polypeptide is Acetyl-coenzyme A carboxylase carboxyl transferase subunit beta (Protochlamydia amoebophila (strain UWE25)).